Here is a 459-residue protein sequence, read N- to C-terminus: Putrescine aminotransferase (459 aa).

Pyridoxal 5'-phosphate-binding positions include 150–151 (GT) and Q274. K300 carries the N6-(pyridoxal phosphate)lysine modification. Residue T332 participates in pyridoxal 5'-phosphate binding.

The protein belongs to the class-III pyridoxal-phosphate-dependent aminotransferase family. Putrescine aminotransferase subfamily. It depends on pyridoxal 5'-phosphate as a cofactor.

It carries out the reaction an alkane-alpha,omega-diamine + 2-oxoglutarate = an omega-aminoaldehyde + L-glutamate. It catalyses the reaction putrescine + 2-oxoglutarate = 1-pyrroline + L-glutamate + H2O. The enzyme catalyses cadaverine + 2-oxoglutarate = 5-aminopentanal + L-glutamate. Its pathway is amine and polyamine degradation; putrescine degradation; 4-aminobutanal from putrescine (transaminase route): step 1/1. Catalyzes the aminotransferase reaction from putrescine to 2-oxoglutarate, leading to glutamate and 4-aminobutanal, which spontaneously cyclizes to form 1-pyrroline. This is the first step in one of two pathways for putrescine degradation, where putrescine is converted into 4-aminobutanoate (gamma-aminobutyrate or GABA) via 4-aminobutanal. Also functions as a cadaverine transaminase in a a L-lysine degradation pathway to succinate that proceeds via cadaverine, glutarate and L-2-hydroxyglutarate. The polypeptide is Putrescine aminotransferase (Escherichia coli O8 (strain IAI1)).